A 197-amino-acid polypeptide reads, in one-letter code: Chromophore lyase CpcT/CpeT (197 aa).

Belongs to the CpcT/CpeT biliprotein lyase family.

In terms of biological role, covalently attaches a chromophore to Cys residue(s) of phycobiliproteins. This is Chromophore lyase CpcT/CpeT from Synechococcus sp. (strain WH8103).